We begin with the raw amino-acid sequence, 393 residues long: Heparan sulfate glucosamine 3-O-sulfotransferase 3A1 (393 aa).

Over 1–24 the chain is Cytoplasmic; the sequence is MAPSGPTGAQPSPAEPLSRSIFRK. A helical; Signal-anchor for type II membrane protein membrane pass occupies residues 25-43; sequence FLLMLCSLLTSLYVFYCLA. At 44–393 the chain is on the lumenal side; the sequence is ERCPPGSGPV…MTGRDFGWDG (350 aa). The interval 85 to 121 is disordered; sequence QRRRRGRSGPGDSSDQEEQSPGLAAAPGGSGAGSSVA. Residue 149–153 participates in 3'-phosphoadenylyl sulfate binding; sequence KGGTR. Residues 171-177 and 202-205 contribute to the substrate site; these read EPHFFDR and KTPS. 2 residues coordinate 3'-phosphoadenylyl sulfate: R230 and S238. An N-linked (GlcNAc...) asparagine glycan is attached at N260. 270-271 is a substrate binding site; the sequence is WS. A glycan (N-linked (GlcNAc...) asparagine) is linked at N331. An intrachain disulfide couples C338 to C350. Residue 355–359 participates in 3'-phosphoadenylyl sulfate binding; that stretch reads KGRAH.

The protein belongs to the sulfotransferase 1 family.

The protein localises to the golgi apparatus membrane. The enzyme catalyses alpha-D-glucosaminyl-[heparan sulfate](n) + 3'-phosphoadenylyl sulfate = 3-sulfo-alpha-D-glucosaminyl-[heparan sulfate](n) + adenosine 3',5'-bisphosphate + H(+). Sulfotransferase that utilizes 3'-phospho-5'-adenylyl sulfate (PAPS) to catalyze the transfer of a sulfo group to an N-unsubstituted glucosamine linked to a 2-O-sulfo iduronic acid unit on heparan sulfate. Catalyzes the O-sulfation of glucosamine in IdoUA2S-GlcNS and also in IdoUA2S-GlcNH2. Unlike HS3ST1/3-OST-1, does not convert non-anticoagulant heparan sulfate to anticoagulant heparan sulfate. The sequence is that of Heparan sulfate glucosamine 3-O-sulfotransferase 3A1 (Hs3st3a1) from Mus musculus (Mouse).